Reading from the N-terminus, the 720-residue chain is Proline-rich receptor-like protein kinase PERK12 (720 aa).

The disordered stretch occupies residues 1–240 (MSDLGESPSS…GNGDGGGGGG (240 aa)). Residues 1–246 (MSDLGESPSS…GGGGGYQGKT (246 aa)) lie on the Extracellular side of the membrane. Pro residues predominate over residues 10-25 (SSPPAPPADTAPPPET). Residues 26–35 (PSENSALPPV) show a composition bias toward low complexity. Pro residues-rich tracts occupy residues 52 to 84 (LSEPSTPPPDSQLPPLPSILPPLTDSPPPPSDS) and 92 to 116 (PSPPPPTSNESPSPPEDSETPPAPP). N-linked (GlcNAc...) asparagine glycosylation is present at asparagine 117. 2 stretches are compositionally biased toward pro residues: residues 123–138 (NPPPSQDLQSPPPSSP) and 147–207 (PESP…PPKT). Residues 247–267 (MVGMAVAGFAIMALIGVVFLV) traverse the membrane as a helical segment. At 268–720 (RRKKKRNIDS…ETRPFNNRRF (453 aa)) the chain is on the cytoplasmic side. The disordered stretch occupies residues 300 to 349 (QDPGKGYSSGPNGSMYNNSQQQQSSMGNSYGTAGGGYPHHQMQSSGTPDS). Positions 311-330 (NGSMYNNSQQQQSSMGNSYG) are enriched in low complexity. The 254-residue stretch at 371–624 (FARKNILGEG…EVFRMIETAA (254 aa)) folds into the Protein kinase domain. ATP is bound by residues 377–385 (LGEGGFGCV) and lysine 399. Tyrosine 444 is modified (phosphotyrosine). Aspartate 495 (proton acceptor) is an active-site residue. A Phosphoserine modification is found at serine 528. Residues threonine 529 and threonine 534 each carry the phosphothreonine modification. A Phosphotyrosine modification is found at tyrosine 542. A disordered region spans residues 698–720 (SAKSSSDFSGNESETRPFNNRRF).

This sequence belongs to the protein kinase superfamily. Ser/Thr protein kinase family. In terms of tissue distribution, mostly expressed in apical parts, including flower buds, and particularly in anthers. Also present in root hairs.

It is found in the cell membrane. The catalysed reaction is L-seryl-[protein] + ATP = O-phospho-L-seryl-[protein] + ADP + H(+). It catalyses the reaction L-threonyl-[protein] + ATP = O-phospho-L-threonyl-[protein] + ADP + H(+). Regulates the auxin-related MAX (More Axillary Growth) pathway during the shoot branching. This Arabidopsis thaliana (Mouse-ear cress) protein is Proline-rich receptor-like protein kinase PERK12 (PERK12).